We begin with the raw amino-acid sequence, 189 residues long: T-cell surface glycoprotein CD3 epsilon chain (189 aa).

The signal sequence occupies residues 1 to 21 (MRWNTFWGILCLSLLAVGTCQ). One can recognise an Ig-like domain in the interval 23-99 (DAENIEYKVS…KNTYLYLKAR (77 aa)). The Extracellular portion of the chain corresponds to 23 to 108 (DAENIEYKVS…RVCEYCVEVD (86 aa)). Cys42 and Cys83 are disulfide-bonded. Residues 109–134 (LTAVAIIIIVDICITLGLLMVIYYWS) traverse the membrane as a helical segment. The Cytoplasmic segment spans residues 135-189 (KNRKAKAKPVTRGTGAGSRPRGQNKERPPPVPNPDYEPIRKGQRDLYSGLNQRAV). The tract at residues 143-189 (PVTRGTGAGSRPRGQNKERPPPVPNPDYEPIRKGQRDLYSGLNQRAV) is disordered. The NUMB-binding region stretch occupies residues 157–174 (QNKERPPPVPNPDYEPIR). Residues 160–187 (ERPPPVPNPDYEPIRKGQRDLYSGLNQR) enclose the ITAM domain. A proline-rich sequence region spans residues 161–168 (RPPPVPNP). Residues Tyr170 and Tyr181 each carry the phosphotyrosine modification.

In terms of assembly, the TCR-CD3 complex is composed of a CD3D/CD3E and a CD3G/CD3E heterodimers that preferentially associate with TCRalpha and TCRbeta, respectively, to form TCRalpha/CD3E/CD3G and TCRbeta/CD3G/CD3E trimers. In turn, the hexamer interacts with CD3Z homodimer to form the TCR-CD3 complex. Alternatively, TCRalpha and TCRbeta can be replaced by TCRgamma and TCRdelta. Interacts with CD6. Interacts (via Proline-rich sequence) with NCK1; the interaction is ligand dependent but independent of tyrosine kinase activation. Post-translationally, phosphorylated on Tyr residues after T-cell receptor triggering by LCK in association with CD4/CD8.

The protein resides in the cell membrane. Part of the TCR-CD3 complex present on T-lymphocyte cell surface that plays an essential role in adaptive immune response. When antigen presenting cells (APCs) activate T-cell receptor (TCR), TCR-mediated signals are transmitted across the cell membrane by the CD3 chains CD3D, CD3E, CD3G and CD3Z. All CD3 chains contain immunoreceptor tyrosine-based activation motifs (ITAMs) in their cytoplasmic domain. Upon TCR engagement, these motifs become phosphorylated by Src family protein tyrosine kinases LCK and FYN, resulting in the activation of downstream signaling pathways. In addition of this role of signal transduction in T-cell activation, CD3E plays an essential role in correct T-cell development. Also participates in internalization and cell surface down-regulation of TCR-CD3 complexes via endocytosis sequences present in CD3E cytosolic region. In addition to its role as a TCR coreceptor, it serves as a receptor for ITPRIPL1. Ligand recognition inhibits T-cell activation by promoting interaction with NCK1, which prevents CD3E-ZAP70 interaction and blocks the ERK-NFkB signaling cascade and calcium influx. The chain is T-cell surface glycoprotein CD3 epsilon chain (Cd3e) from Mus musculus (Mouse).